The following is a 548-amino-acid chain: Membrane protein insertase YidC (548 aa).

A helical transmembrane segment spans residues 6 to 26 (NLLVIALLFVSFMIWQAWEQD). The tract at residues 28–56 (NPQPQTQQTTQTTTTAAGSAADQGVPASG) is disordered. The span at 29–42 (PQPQTQQTTQTTTT) shows a compositional bias: low complexity. Transmembrane regions (helical) follow at residues 350–370 (FVGN…GIMY), 424–444 (FPLI…MGSI), 458–478 (LSAQ…MFFI), and 499–519 (PVIF…YYIV).

It belongs to the OXA1/ALB3/YidC family. Type 1 subfamily. Interacts with the Sec translocase complex via SecD. Specifically interacts with transmembrane segments of nascent integral membrane proteins during membrane integration.

The protein resides in the cell inner membrane. Functionally, required for the insertion and/or proper folding and/or complex formation of integral membrane proteins into the membrane. Involved in integration of membrane proteins that insert both dependently and independently of the Sec translocase complex, as well as at least some lipoproteins. Aids folding of multispanning membrane proteins. The chain is Membrane protein insertase YidC from Salmonella agona (strain SL483).